Reading from the N-terminus, the 474-residue chain is MNFWLQEQAQSNGNRLAIVTNQLSLTYEELYHRAKTIAQYLTSLNQKRIGLYISNDIDSVVLIHACWLAHIEIAMINTRLTRHEMINQMNSVDIATIVHTLPLELEGFNLYHFNDLTQLDKHDVSGYKFNLESIASIMFTSGTTGPQKAVPQTFNNHLASAKGCKQSLGFEQNTVWLSVLPIYHISGLSVILRAVIEGFTVRLVKKFQTDDMLTQIKTYPITHMSLVPQTLKWLMDAGLTQPFSLEKILLGGAKLSPQLIEQAFAYRLPVYNSFGMTETCSQFLTASPQMLKERFDTVGKTSENVEVKIKNPNAYGHGELLIKGENVMNGYLYPKYLKDTFDNDGYFQTGDIAEIDDEGYVIIYDRRKDLIISGGENIYPYQIETIAKDFEGIEDAVCVGISDDTWGQVPILYYVTNQDINQNELIEHFENHLARYKIPKKYYQVESLPYTSTGKLQRKKVKSEDLNEGKNNES.

The protein belongs to the ATP-dependent AMP-binding enzyme family. MenE subfamily.

It carries out the reaction 2-succinylbenzoate + ATP + CoA = 2-succinylbenzoyl-CoA + AMP + diphosphate. It participates in quinol/quinone metabolism; 1,4-dihydroxy-2-naphthoate biosynthesis; 1,4-dihydroxy-2-naphthoate from chorismate: step 5/7. Its pathway is quinol/quinone metabolism; menaquinone biosynthesis. Its function is as follows. Converts 2-succinylbenzoate (OSB) to 2-succinylbenzoyl-CoA (OSB-CoA). The protein is 2-succinylbenzoate--CoA ligase of Staphylococcus epidermidis (strain ATCC 12228 / FDA PCI 1200).